The sequence spans 370 residues: MVFLKVDCSKLFIFLCCIMSITILSFSLVFPYYESDFIIVNHTDIRNNTIVINKEFHQFQFFGTYFYDINRFEMKTSFNQAYLITKRVSYDSYDSSTKNSVFQIITSMTLTSLIAKVFPIPILIVNMYINLQKPKRRYLNQIQQHHNNNNNNNNNNNNNNNNNNNNNNNNNNNNNNNNNNNNQNNNNNDNNDNNDVLDGANEVVINTMPTYEVLMERYQSSASYYLITQLVVNGVSFMITLFSTFVVTHRISITMKLLTSIDEQIFNKPLCYTKNLDPFGYCNSFIGFSSTTSDENFMDFSWGPSFGWYLSLCSLCLDSFSIIVIIFLIITEGKLKKPKQPHKFTNILNLSDMDLINYRLLTLNQRIGTD.

The next 2 membrane-spanning stretches (helical) occupy residues 11-31 and 104-124; these read LFIF…LVFP and IITS…PILI. Residues 145 to 197 are disordered; sequence HHNNNNNNNNNNNNNNNNNNNNNNNNNNNNNNNNNNNNQNNNNNDNNDNNDVL. A compositionally biased stretch (low complexity) spans 147–194; it reads NNNNNNNNNNNNNNNNNNNNNNNNNNNNNNNNNNNNQNNNNNDNNDNN. 2 helical membrane passes run 227-247 and 310-330; these read ITQL…TFVV and LSLC…FLII.

The protein resides in the membrane. This is an uncharacterized protein from Dictyostelium discoideum (Social amoeba).